The sequence spans 472 residues: Divalent metal cation transporter MntH (472 aa).

The next 11 membrane-spanning stretches (helical) occupy residues 59-79 (LLAF…PGNW), 92-112 (MLLS…ALAA), 136-156 (LALW…EVIG), 167-187 (VPII…LLLM), 196-216 (AFVI…IVLA), 233-253 (VVAD…TVMP), 288-308 (LALM…AAVF), 325-345 (LLAP…ALLA), 377-397 (VLTR…YGEQ), 402-422 (LLLL…IPLL), and 439-459 (WLMV…VKLL).

This sequence belongs to the NRAMP family.

It is found in the cell inner membrane. In terms of biological role, h(+)-stimulated, divalent metal cation uptake system. In Xylella fastidiosa (strain 9a5c), this protein is Divalent metal cation transporter MntH.